A 311-amino-acid polypeptide reads, in one-letter code: Prohibitin-2 (311 aa).

A helical membrane pass occupies residues 39 to 57 (GAGMGLAGLVLLGGAAFVA). The AIM signature appears at 141 to 144 (YRTL).

It belongs to the prohibitin family. The mitochondrial prohibitin complex consists of two subunits (PHB1 and PHB2). The subunits assemble into a membrane-associated ring-shaped supercomplex of approximately 1 mDa. Interacts with ATG24/SNX4; the interaction is direct and plays a role in mitophagy.

The protein resides in the mitochondrion inner membrane. Functionally, prohibitin probably acts as a holdase/unfoldase for the stabilization of newly synthesized mitochondrial proteins. Involved in mitophagy. Required for the switch to necrotrophic growth. The protein is Prohibitin-2 of Colletotrichum higginsianum (strain IMI 349063) (Crucifer anthracnose fungus).